The chain runs to 919 residues: MATPSMMPQWSYMHIAGQDASEYLSPGLVQFARATDTYFTLGNKFRNPTVAPTHDVTTDRSQRLTLRFVPVDREDTTYSYKARFTLAVGDNRVLDMASSYFDIRGVLDRGPSFKPYSGTAYNSLAPKGAPNASQWSDNAKLNTFAQAPYLSDTITAADGIKVGTDTAQAGAAVYANKTYQPEPQVGPSEWNTSIENVKAGGRALKQTTAMQPCYGSYARPTNEHGGQSKDDNIELKFFDSANNAANTAQVVFYTEDVNLEMPDTHLVFKPTVTNGTIASESLLGQQAAPNRANYIAFRDNFIGLMYYNSTGNMGVLAGQASQLNAVVDLQDRNTELSYQLMLDALGDRTRYFSLWNSAVDSYDPDVRVIENHGVEDELPNYCFPLSAVGEIKNYKGIKPDNGGGGGWTADNTVSEANHIGIGNIAAMEINLQANLWRSFLYSNVGLYLPDDLKYTPGNIKLPDNKNTYEYMNGRVTAPGLVDTYVNIGARWSPDVMDNVNPFNHHRNAGLRYRSMLLGNGRFVPFHIQVPQKFFAIRNLLLLPGSYTYEWNFRKDVNMILQSTLGNDLRVDGASVRFDNIALYANFFPMAHNTASTLEAMLRNDTNDQSFNDYLCAANMLYPIPANATSVPISIPSRNWAAFRGWSFTRLKTKETPSLGSGFDPYFVYSGTIPYLDGTFYLNHTFKKVSIMFDSSVSWPGNDRLLTPNEFEIKRSVDGEGYNVAQCNMTKDWFLIQMLSHYNIGYQGFYIPESYKDRMYSFFRNFQPMSRQVVDTTEYKNYKKVTVEFQHNNSGFVGYLGPTMREGQAYPANYPYPLIGQTAVESITQKKFLCDRVMWRIPFSSNFMSMGALTDLGQNMLYANSAHALDMTFEVDPMDEPTLLYVLFEVFDVVRIHQPHRGVIEAVYLRTPFSAGNATT.

A2 is subject to N-acetylalanine; by host. Y907 bears the Phosphotyrosine; by host mark.

Belongs to the adenoviridae hexon protein family. As to quaternary structure, homotrimer. Interacts with the capsid vertex protein; this interaction binds the peripentonal hexons to the neighboring penton base. Interacts with the hexon-linking protein; this interaction tethers the hexons surrounding the penton to those situated in the central plate of the facet. Interacts with the hexon-interlacing protein; this interaction lashes the hexons together. Interacts with host dyneins DYNC1LI1 and DYNC1I2; this interaction might be involved in intracellular microtubule-dependent transport of incoming viral capsid. Interacts with the shutoff protein; this interaction allows folding and formation of hexons trimers. Interacts with pre-protein VI; this interaction probably allows nuclear import of hexon trimers and possibly pre-capsid assembly.

The protein resides in the virion. It is found in the host nucleus. Its function is as follows. Major capsid protein that self-associates to form 240 hexon trimers, each in the shape of a hexagon, building most of the pseudo T=25 capsid. Assembled into trimeric units with the help of the chaperone shutoff protein. Transported by pre-protein VI to the nucleus where it associates with other structural proteins to form an empty capsid. Might be involved, through its interaction with host dyneins, in the intracellular microtubule-dependent transport of incoming viral capsid to the nucleus. In Human adenovirus A serotype 12 (HAdV-12), this protein is Hexon protein.